The primary structure comprises 87 residues: Small ribosomal subunit protein uS17 (87 aa).

It belongs to the universal ribosomal protein uS17 family. In terms of assembly, part of the 30S ribosomal subunit.

One of the primary rRNA binding proteins, it binds specifically to the 5'-end of 16S ribosomal RNA. The polypeptide is Small ribosomal subunit protein uS17 (Aster yellows witches'-broom phytoplasma (strain AYWB)).